Reading from the N-terminus, the 102-residue chain is Small ribosomal subunit protein uS10 (102 aa).

Belongs to the universal ribosomal protein uS10 family. In terms of assembly, part of the 30S ribosomal subunit.

Involved in the binding of tRNA to the ribosomes. This is Small ribosomal subunit protein uS10 from Treponema pallidum (strain Nichols).